Consider the following 270-residue polypeptide: Shikimate dehydrogenase (NADP(+)) (270 aa).

Residues 14-16 and threonine 61 each bind shikimate; that span reads SKS. Residue lysine 65 is the Proton acceptor of the active site. Residues asparagine 86 and aspartate 101 each contribute to the shikimate site. Residues 126–130, 150–155, and methionine 215 each bind NADP(+); these read GAGGA and NRTVDK. Tyrosine 217 provides a ligand contact to shikimate. An NADP(+)-binding site is contributed by glycine 238.

The protein belongs to the shikimate dehydrogenase family. In terms of assembly, homodimer.

It catalyses the reaction shikimate + NADP(+) = 3-dehydroshikimate + NADPH + H(+). It functions in the pathway metabolic intermediate biosynthesis; chorismate biosynthesis; chorismate from D-erythrose 4-phosphate and phosphoenolpyruvate: step 4/7. In terms of biological role, involved in the biosynthesis of the chorismate, which leads to the biosynthesis of aromatic amino acids. Catalyzes the reversible NADPH linked reduction of 3-dehydroshikimate (DHSA) to yield shikimate (SA). The chain is Shikimate dehydrogenase (NADP(+)) from Methylobacillus flagellatus (strain ATCC 51484 / DSM 6875 / VKM B-1610 / KT).